The sequence spans 473 residues: Arginine biosynthesis bifunctional protein ArgJ, mitochondrial (473 aa).

Residues Thr-201, Lys-230, Thr-241, Glu-328, Asn-468, and Thr-473 each contribute to the substrate site. The active-site Nucleophile is Thr-241.

This sequence belongs to the ArgJ family. In terms of assembly, heterodimer of an alpha and a beta chain. The alpha and beta chains are autoproteolytically processed from a single precursor protein within the mitochondrion.

Its subcellular location is the mitochondrion matrix. The enzyme catalyses N(2)-acetyl-L-ornithine + L-glutamate = N-acetyl-L-glutamate + L-ornithine. It carries out the reaction L-glutamate + acetyl-CoA = N-acetyl-L-glutamate + CoA + H(+). It functions in the pathway amino-acid biosynthesis; L-arginine biosynthesis; L-ornithine and N-acetyl-L-glutamate from L-glutamate and N(2)-acetyl-L-ornithine (cyclic): step 1/1. It participates in amino-acid biosynthesis; L-arginine biosynthesis; N(2)-acetyl-L-ornithine from L-glutamate: step 1/4. Functionally, catalyzes two activities which are involved in the cyclic version of arginine biosynthesis: the synthesis of acetylglutamate from glutamate and acetyl-CoA, and of ornithine by transacetylation between acetylornithine and glutamate. This is Arginine biosynthesis bifunctional protein ArgJ, mitochondrial from Blastomyces gilchristii (strain SLH14081) (Blastomyces dermatitidis).